Here is a 340-residue protein sequence, read N- to C-terminus: Phenylalanine--tRNA ligase alpha subunit (340 aa).

Position 254 (glutamate 254) interacts with Mg(2+).

Belongs to the class-II aminoacyl-tRNA synthetase family. Phe-tRNA synthetase alpha subunit type 1 subfamily. Tetramer of two alpha and two beta subunits. The cofactor is Mg(2+).

It is found in the cytoplasm. The enzyme catalyses tRNA(Phe) + L-phenylalanine + ATP = L-phenylalanyl-tRNA(Phe) + AMP + diphosphate + H(+). The polypeptide is Phenylalanine--tRNA ligase alpha subunit (Chloroherpeton thalassium (strain ATCC 35110 / GB-78)).